The following is a 481-amino-acid chain: Probable glycine dehydrogenase (decarboxylating) subunit 2 (481 aa).

Residue Lys269 is modified to N6-(pyridoxal phosphate)lysine.

The protein belongs to the GcvP family. C-terminal subunit subfamily. The glycine cleavage system is composed of four proteins: P, T, L and H. In this organism, the P 'protein' is a heterodimer of two subunits. Pyridoxal 5'-phosphate serves as cofactor.

It catalyses the reaction N(6)-[(R)-lipoyl]-L-lysyl-[glycine-cleavage complex H protein] + glycine + H(+) = N(6)-[(R)-S(8)-aminomethyldihydrolipoyl]-L-lysyl-[glycine-cleavage complex H protein] + CO2. In terms of biological role, the glycine cleavage system catalyzes the degradation of glycine. The P protein binds the alpha-amino group of glycine through its pyridoxal phosphate cofactor; CO(2) is released and the remaining methylamine moiety is then transferred to the lipoamide cofactor of the H protein. The sequence is that of Probable glycine dehydrogenase (decarboxylating) subunit 2 from Chlorobium chlorochromatii (strain CaD3).